A 455-amino-acid chain; its full sequence is Bifunctional protein GlmU (455 aa).

The pyrophosphorylase stretch occupies residues M1 to R226. UDP-N-acetyl-alpha-D-glucosamine contacts are provided by residues L8–G11, K22, Q73, G78–T79, Y99–D101, G136, E151, N166, and N224. Residue D101 participates in Mg(2+) binding. N224 contributes to the Mg(2+) binding site. Positions T227–K247 are linker. An N-acetyltransferase region spans residues G248–K455. R330 and K348 together coordinate UDP-N-acetyl-alpha-D-glucosamine. H360 (proton acceptor) is an active-site residue. Positions 363 and 374 each coordinate UDP-N-acetyl-alpha-D-glucosamine. Acetyl-CoA contacts are provided by residues A377, N383 to Y384, S402, A420, and R437.

This sequence in the N-terminal section; belongs to the N-acetylglucosamine-1-phosphate uridyltransferase family. It in the C-terminal section; belongs to the transferase hexapeptide repeat family. As to quaternary structure, homotrimer. It depends on Mg(2+) as a cofactor.

It localises to the cytoplasm. The catalysed reaction is alpha-D-glucosamine 1-phosphate + acetyl-CoA = N-acetyl-alpha-D-glucosamine 1-phosphate + CoA + H(+). The enzyme catalyses N-acetyl-alpha-D-glucosamine 1-phosphate + UTP + H(+) = UDP-N-acetyl-alpha-D-glucosamine + diphosphate. Its pathway is nucleotide-sugar biosynthesis; UDP-N-acetyl-alpha-D-glucosamine biosynthesis; N-acetyl-alpha-D-glucosamine 1-phosphate from alpha-D-glucosamine 6-phosphate (route II): step 2/2. It functions in the pathway nucleotide-sugar biosynthesis; UDP-N-acetyl-alpha-D-glucosamine biosynthesis; UDP-N-acetyl-alpha-D-glucosamine from N-acetyl-alpha-D-glucosamine 1-phosphate: step 1/1. The protein operates within bacterial outer membrane biogenesis; LPS lipid A biosynthesis. Catalyzes the last two sequential reactions in the de novo biosynthetic pathway for UDP-N-acetylglucosamine (UDP-GlcNAc). The C-terminal domain catalyzes the transfer of acetyl group from acetyl coenzyme A to glucosamine-1-phosphate (GlcN-1-P) to produce N-acetylglucosamine-1-phosphate (GlcNAc-1-P), which is converted into UDP-GlcNAc by the transfer of uridine 5-monophosphate (from uridine 5-triphosphate), a reaction catalyzed by the N-terminal domain. The protein is Bifunctional protein GlmU of Francisella tularensis subsp. novicida (strain U112).